The following is a 220-amino-acid chain: Protein LURP-one-related 12 (220 aa).

It belongs to the LOR family.

Might be related to the phospholipid scramblase and tubby-like superfamily of membrane tethered transcription factors. This chain is Protein LURP-one-related 12, found in Arabidopsis thaliana (Mouse-ear cress).